Reading from the N-terminus, the 451-residue chain is Prenyltransferase anuH (451 aa).

6 residues coordinate dimethylallyl diphosphate: arginine 105, lysine 189, tyrosine 191, lysine 257, tyrosine 259, and tyrosine 422.

It belongs to the tryptophan dimethylallyltransferase family.

The enzyme catalyses (8S)-annullatin E + dimethylallyl diphosphate = (8S)-annullatin J + diphosphate. Its pathway is secondary metabolite biosynthesis. Cytochrome P450 monooxygenase; part of the gene cluster that mediates the biosynthesis of annullatin D, an alkylated aromatic polyketide with a fused dihydrobenzofuran lactone ring system that exhibits potent agonistic activities toward the cannabinoid receptors. Within the pathway, anuH uses dimethylallyl diphosphate (DMAPP) to prenylate (8S)-annullatin E to produce (8S)-annullatin J. Geranyl and farnesyl diphosphate are not consumed by anuH for prenylation. 2-hydroxymethyl-3-pentylphenol, without the hydroxyl group at the side chain, is also accepted by anuH, but only with low conversion yield. The annullatin backbone 2-hydroxymethyl-3-pentylphenol is assembled from one acetyl-CoA starter unit and 5 malonyl-CoA elongation units by cooperation of the highly reducing polyketide synthase anuA, the short-chain dehydrogenase anuB and the oxidoreductase anuC, before being hydroxylated at the C-5 alkyl chain by the cytochrome P450 monooxygenase anuE to form (8S)-annullatin E. The prenyltransferase anuH subsequently installs one isoprenyl group at the benzene ring to form (8S)-annullatin J. Enzymatic or nonenzymatic dihydro-benzofuran ring formation between the prenyl and the phenolic hydroxyl groups in (8S)-annullatin J results in two diastereomers (2S,9S)-annullatin H and compound 12. The intermediate (2S,9S)-annullatin H is then converted to (2S,9S)-annullatin D by the FAD-linked oxidoreductase anuG-catalyzed five-member lactone ring formation. The isomer 12 acts as a substrate for the short-chain dehydrogenase anuF and is oxidized to (2R)-annullatin F, which is subsequently acetylated by an acetyltransferase leading to (2R)-annullatin G formation. The remaining enzymes identified within the cluster, anuD, anuI and anuJ, seem not to be involved in annullatin biosynthesis. The polypeptide is Prenyltransferase anuH (Penicillium roqueforti (strain FM164)).